Consider the following 881-residue polypeptide: Sodium/potassium/calcium exchanger Nckx30C (881 aa).

Residues 1-194 (MLQPTTCSKQ…SRCRSRRCLR (194 aa)) lie on the Extracellular side of the membrane. N69 carries an N-linked (GlcNAc...) asparagine glycan. 4 disordered regions span residues 79–111 (DMLSAGRSRSSSTTIDFNSRRRRGRLRGHAPSD), 149–181 (AKTRSRTAAQLPATSAASATSSRGASAEQLLHP), 215–255 (AAKP…TSGE), and 272–315 (GLEE…TTKT). Polar residues predominate over residues 85–95 (RSRSSSTTIDF). Residues 149–175 (AKTRSRTAAQLPATSAASATSSRGASA) are compositionally biased toward low complexity. The chain crosses the membrane as a helical span at residues 195–215 (LPIYSILLLCLTTQGLGLGDA). Residues 216-330 (AKPRPAKQHF…DLFTKEQLEN (115 aa)) are Cytoplasmic-facing. Over residues 228-240 (SNSNSPNQNQNHN) the composition is skewed to low complexity. Residues 296-315 (AGNQRGINDTHNDNSTTTKT) are compositionally biased toward polar residues. The helical transmembrane segment at 331–351 (GAVILHIIGVIYMFVALAIVC) threads the bilayer. The Extracellular portion of the chain corresponds to 352–375 (DEFFVPSLDVIIEKLGITDDVAGA). One copy of the Alpha-1 repeat lies at 372–412 (VAGATFMAAGGSAPELFTSVIGVFVSFDDVGIGTIVGSAVF). Residues 376–396 (TFMAAGGSAPELFTSVIGVFV) form a helical membrane-spanning segment. Residues 397-402 (SFDDVG) lie on the Cytoplasmic side of the membrane. The helical transmembrane segment at 403–423 (IGTIVGSAVFNILFVIGMCAL) threads the bilayer. The Extracellular portion of the chain corresponds to 424–433 (FSKTVLSLTW). The chain crosses the membrane as a helical span at residues 434–454 (WPLFRDCSFYSISLLVLIYFF). Topologically, residues 455–458 (RDNR) are cytoplasmic. The chain crosses the membrane as a helical span at residues 459-479 (IFWWEALILFTIYIGYVAFMK). Residues 480 to 720 (WNVQVETCVK…PDTRTPRGKR (241 aa)) are Extracellular-facing. Residues 508-565 (PAGNAANSSETSMATQPGGSVTSRAASETRSGPPGSSNAGATGNSSGGGGTSGSTQTG) form a disordered region. Polar residues predominate over residues 512 to 537 (AANSSETSMATQPGGSVTSRAASETR). N-linked (GlcNAc...) asparagine glycans are attached at residues N514 and N551. Low complexity predominate over residues 542 to 551 (GSSNAGATGN). A helical membrane pass occupies residues 721–741 (FFPVTFIGSIVWIAAFSYLMV). Residues 742 to 756 (WWANVAGDTARIPPE) lie on the Cytoplasmic side of the membrane. A helical membrane pass occupies residues 757–777 (VMGLTFLAAGTSIPDLITSVI). Residues 764–795 (AAGTSIPDLITSVIVARKGFGDMAVSSSVGSN) form an Alpha-2 repeat. The Extracellular portion of the chain corresponds to 778 to 795 (VARKGFGDMAVSSSVGSN). The chain crosses the membrane as a helical span at residues 796–816 (IFDVTVGLPIPWLLYGIIYGA). Residues 817 to 822 (PVEVNS) lie on the Cytoplasmic side of the membrane. A helical membrane pass occupies residues 823–843 (VGMVCSITILFMMLVFVVMSI). Over 844 to 852 (ACFRWRMNK) the chain is Extracellular. Residues 853 to 873 (GLGFTMFLLYFAFVAVSLMFE) traverse the membrane as a helical segment. Topologically, residues 874–881 (YDVITCPF) are cytoplasmic.

Belongs to the Ca(2+):cation antiporter (CaCA) (TC 2.A.19) family. SLC24A subfamily. In terms of tissue distribution, expressed in the adult nervous system. Expressed in the photoreceptor cells as well as in the lamina, medulla, and optic lobes of the brain.

Its subcellular location is the membrane. Its function is as follows. May function in the removal and maintenance of calcium homeostasis during signaling in the adult and in signaling events during embryogenesis and patterning of imaginal disks. Transports one Ca(2+) and 1 K(+) in exchange for 4 Na(+). The protein is Sodium/potassium/calcium exchanger Nckx30C (Nckx30C) of Drosophila melanogaster (Fruit fly).